Consider the following 531-residue polypeptide: rRNA methyltransferase 1, mitochondrial (531 aa).

The N-terminal 40 residues, 1–40 (MISIFKILSSPKPATTTTNIINPINIINGIRYFSSNQEDY), are a transit peptide targeting the mitochondrion. Disordered regions lie at residues 70 to 141 (ESHY…RTEY) and 230 to 277 (IEDE…KKTT). Residues 74–136 (NNNNNSNNNS…NNFRNNNNNN (63 aa)) show a composition bias toward low complexity. Over residues 247-267 (EQNEYEEEQEEEKVQEEEEDN) the composition is skewed to acidic residues.

It belongs to the class IV-like SAM-binding methyltransferase superfamily. RNA methyltransferase TrmH family.

The protein resides in the mitochondrion. It catalyses the reaction a uridine in rRNA + S-adenosyl-L-methionine = a 2'-O-methyluridine in rRNA + S-adenosyl-L-homocysteine + H(+). S-adenosyl-L-methionine-dependent 2'-O-ribose methyltransferase that catalyzes the formation of a 2'-O-methylguanosine in the mitochondrial large subunit ribosomal RNA (mtLSU rRNA), a universally conserved modification in the peptidyl transferase domain of the mtLSU rRNA. The sequence is that of rRNA methyltransferase 1, mitochondrial (mrm1) from Dictyostelium discoideum (Social amoeba).